Here is a 225-residue protein sequence, read N- to C-terminus: Uracil-DNA glycosylase (225 aa).

The Proton acceptor role is filled by Asp-65.

This sequence belongs to the uracil-DNA glycosylase (UDG) superfamily. UNG family.

It localises to the cytoplasm. It carries out the reaction Hydrolyzes single-stranded DNA or mismatched double-stranded DNA and polynucleotides, releasing free uracil.. Functionally, excises uracil residues from the DNA which can arise as a result of misincorporation of dUMP residues by DNA polymerase or due to deamination of cytosine. The chain is Uracil-DNA glycosylase from Bacillus cereus (strain AH187).